A 158-amino-acid polypeptide reads, in one-letter code: Class 10 plant pathogenesis-related protein 2B (158 aa).

Position 8 (D8) interacts with trans-zeatin. Residues P32, V35, and I38 each contribute to the Ca(2+) site. Positions 60, 69, 81, and 83 each coordinate trans-zeatin. Y83 contributes to the melatonin binding site.

This sequence belongs to the BetVI family.

The protein resides in the cytoplasm. It localises to the cytosol. Class II ribonuclease (RNase). Binds to several cytokinins including natural adenine-type (e.g. trans-zeatin and kinetin) and artificial urea-type (e.g. N,N'-diphenylurea and N-phenyl-N'-(2-chloro-4-pyridyl)urea) hormones. Interacts with melatonin. The sequence is that of Class 10 plant pathogenesis-related protein 2B from Lupinus luteus (European yellow lupine).